The chain runs to 82 residues: uncharacterized protein (82 aa).

A run of 2 helical transmembrane segments spans residues 8 to 28 and 50 to 70; these read LTTAAGILLMAFLSCLLLPAP and LYTLLFCLWFLVLGAIEYFVL.

The protein localises to the cell membrane. This is an uncharacterized protein from Escherichia coli (strain K12).